A 141-amino-acid chain; its full sequence is Subtilase cytotoxin subunit B (141 aa).

A signal peptide spans Met1–Ala23. N-glycoloyl-alpha-neuraminate contacts are provided by residues Met33 to Ser35 and Gln59. Residues Tyr89–Gly94 form a hydrophobic patch important for binding to SubA region. Tyr101 contacts N-glycoloyl-alpha-neuraminate.

Forms a complex with SubA with the stoichiometry SubA1:SubB5 (called SubAB5). Each SubB subunit makes different contacts with the single SubA subunit. This subunit alone forms pentamers.

Its subcellular location is the secreted. It localises to the host cytoplasm. The protein localises to the host cytosol. It is found in the host endoplasmic reticulum lumen. Functionally, receptor-binding subunit of subtilase cytotoxin SubAB5. Required for receptor-binding and thus correct trafficking in the host cell. Has specificity for host glycans terminating in the sialic acid N-glycolyl-alpha-neuraminic acid (Neu5Gc); each subunit in the SubB pentamer binds one Neu5Gc. The protease subunit (SubA) cleaves host BiP/HSPA5, inducing the host endoplasmic reticulum stress response and eventual cell death. Culture supernatant of E.coli expressing both subA and subB are toxic for Vero cells (African green monkey kidney cell line), Chinese hamster ovary cells and Hct-8 cells (human colonic epithelial cell line); the subunits are not toxic individually. Purified SubAB5 is highly toxic, &lt;0.1 pg is able to kill at least 50% of 30'000 Vero cells in a microtiter plate assay after 3 days; no cytotoxicity is seen at 24 hours. Preabsorption with cells expressing a ganglioside GM2 mimic reduced cytotoxicity of SubAB5 by 93% in the Vero cytotoxicity assay. Intraperitoneal injection of 200 ng of purified SubAB5 kills mice; the higher the dose the faster the mice die. Animals injected with purified SubAB5 have microvascular thrombi in the brain and other organs, including the renal tubules and glomeruli. Mice fed E.coli cells expressing cloned SubAB5 experience drastic weight loss and appear ill and lethargic. SubB alone at 2.5 ug/ml causes vacuolation of Vero cells, which requires the V-type ATPase proton pump; treated cells die. Protein synthesis in Vero cells is transiently inhibited by SubAB5; both subunits are required for this effect. Inhibition of protein synthesis is prevented by brefeldin A; cells are arrested in the G1 phase. SubAB5 at 100 ng/ml induced caspase-dependent apoptosis in Vero cells through mitochondrial membrane damage. The chain is Subtilase cytotoxin subunit B from Escherichia coli.